We begin with the raw amino-acid sequence, 178 residues long: NADH-quinone oxidoreductase subunit B 1 (178 aa).

Cys39, Cys40, Cys104, and Cys135 together coordinate [4Fe-4S] cluster.

The protein belongs to the complex I 20 kDa subunit family. As to quaternary structure, NDH-1 is composed of 14 different subunits. Subunits NuoB, C, D, E, F, and G constitute the peripheral sector of the complex. Requires [4Fe-4S] cluster as cofactor.

Its subcellular location is the cell inner membrane. The enzyme catalyses a quinone + NADH + 5 H(+)(in) = a quinol + NAD(+) + 4 H(+)(out). NDH-1 shuttles electrons from NADH, via FMN and iron-sulfur (Fe-S) centers, to quinones in the respiratory chain. The immediate electron acceptor for the enzyme in this species is believed to be a menaquinone. Couples the redox reaction to proton translocation (for every two electrons transferred, four hydrogen ions are translocated across the cytoplasmic membrane), and thus conserves the redox energy in a proton gradient. The chain is NADH-quinone oxidoreductase subunit B 1 from Cytophaga hutchinsonii (strain ATCC 33406 / DSM 1761 / CIP 103989 / NBRC 15051 / NCIMB 9469 / D465).